The following is a 213-amino-acid chain: CDP-diacylglycerol--inositol 3-phosphatidyltransferase (213 aa).

At 1 to 5 the chain is on the cytoplasmic side; that stretch reads MPDEN. A helical membrane pass occupies residues 6-26; the sequence is IFLFVPNLIGYARIVFAIISF. Tyrosine 27 is a topological domain (lumenal). Residues 28 to 48 form a helical membrane-spanning segment; that stretch reads FMPCCPLTASSFYLLSGLLDA. The Mg(2+) site is built by aspartate 47 and aspartate 50. Over 49–73 the chain is Cytoplasmic; that stretch reads FDGHAARALNQGTRFGAMLDMLTDR. A CDP-1,2-diacyl-sn-glycerol-binding residues include glycine 51, arginine 55, and threonine 61. 2 residues coordinate Mg(2+): aspartate 68 and aspartate 72. Aspartate 72 acts as the Proton acceptor in catalysis. The helical transmembrane segment at 74-94 threads the bilayer; that stretch reads CSTMCLLVNLALLYPGATLFF. Glutamine 95 is a topological domain (lumenal). The chain crosses the membrane as a helical span at residues 96–116; it reads ISMSLDVASHWLHLHSSVVRG. The Cytoplasmic segment spans residues 117–139; the sequence is SESHKMIDLSGNPVLRIYYTSRP. A helical transmembrane segment spans residues 140–160; sequence ALFTLCAGNELFYCLLYLFHF. Residues 161-174 are Lumenal-facing; it reads SEGPLVGSVGLFRM. A helical transmembrane segment spans residues 175–195; the sequence is GLWVTAPIALLKSLISVIHLI. The Cytoplasmic segment spans residues 196-213; it reads TAARNMAALDAADRAKKK.

It belongs to the CDP-alcohol phosphatidyltransferase class-I family. Mn(2+) is required as a cofactor. Mg(2+) serves as cofactor. Detected in placenta (at protein level). Widely expressed. Higher expression in adult liver and skeletal muscle, slightly lower levels seen in pancreas, kidney, lung, placenta, brain, heart, leukocyte, colon, small intestine, ovary, testis, prostate, thymus and spleen. In fetus, expressed in kidney, liver, lung and brain.

The protein resides in the endoplasmic reticulum membrane. It localises to the cell membrane. It carries out the reaction a CDP-1,2-diacyl-sn-glycerol + myo-inositol = a 1,2-diacyl-sn-glycero-3-phospho-(1D-myo-inositol) + CMP + H(+). Its activity is regulated as follows. Inhibited by PtdIns (product inhibition), phosphatidylinositol phosphate, and nucleoside di- and tri-phosphates. Its function is as follows. Catalyzes the biosynthesis of phosphatidylinositol (PtdIns) as well as PtdIns:inositol exchange reaction. May thus act to reduce an excessive cellular PtdIns content. The exchange activity is due to the reverse reaction of PtdIns synthase and is dependent on CMP, which is tightly bound to the enzyme. This chain is CDP-diacylglycerol--inositol 3-phosphatidyltransferase, found in Homo sapiens (Human).